A 1227-amino-acid polypeptide reads, in one-letter code: MLNLLSISSSSRLRFLNKVSSLTYHYSFAFFSTSSPASSSSSSLGNDSAIPRNYESSSFNLLSRSKEKRDLTGSSLKDLLFDLSDVVPNITRRFRRFPGLKPEDVLELSLGFESELQRGGIGNIKVQALWEIFRWASVQYQGFKHLPQACEIMASMLIREGMVKEVELLLMEMERHGDTMVNEGIFCDLIGKYVDDFDSRKAVMLFDWMRRKGLVPLTSCYQILIDQLVRVHRTESAYRICLDWVETRAELNHMNIDSIGKVIELLCLDQKVQEARVLARKLVALGCILNSSIYSKITIGYNEKQDFEDLLSFIGEVKYEPDVFVGNRILHSLCRRFGSERAYVYMEELEHLGFKQDEVTFGILIGWCCYEGDIKRAVLYLSEIMSKGYKPDVYSYNAILSGLFRKGLWQHTHCILDEMKENGMMLSLSTFKIMVTGYCKARQFEEAKRIVNKMFGYGLIEASKVEDPLSEAFSLVGFDPLAVRLKRDNDSTFSKAEFFDDLGNGLYLHTDLDAYEQRVNMVLDRSVLPEFNSLIVRASEDGDLQTALRLLDEMARWGQKLSRRSFAVLMRSLCASRAHLRVSISLLEKWPKLAYQLDGETLNFLVQEYCKKGFSRHSKLIFHKMVQMHHPIDNVTYTSLIRCFCKKETLNDLLNVWGAAQNDNWLPDLNDCGDLWNCLVRKGLVEEVVQLFERVFISYPLSQSEACRIFVEKLTVLGFSCIAHSVVKRLEGEGCIVEQEVYNHLIKGLCTEKKDSAAFAILDEMLDKKHIPSLGSCLMLIPRLCRANKAGTAFNLAEQIDSSYVHYALIKGLSLAGKMLDAENQLRIMLSNGLSSYNKIYNVMFQGYCKGNNWMKVEEVLGLMVRKNIICSVKSYREYVRKMCLEPQSLSAISLKEFLLLGESNPGGVIIYNMLIFYMFRAKNHLEVNKVLLEMQGRGVLPDETTFNFLVHGYSSSADYSSSLRYLSAMISKGMKPNNRSLRAVTSSLCDNGDVKKALDLWQVMESKGWNLGSSVVQTKIVETLISKGEIPKAEDFLTRVTRNGMMAPNYDNIIKKLSDRGNLDIAVHLLNTMLKNQSIPGSSSYDSVINGLLRYNQLDKAMDFHTEMVELGLSPSISTWSGLVHKFCEACQVLESERLIKSMVGLGESPSQEMFKTVIDRFRVEKNTVKASEMMEMMQKCGYEVDFETHWSLISNMSSSKEKKTTTAGEGFLSRLLSGNGFTWKR.

The transit peptide at 1–31 (MLNLLSISSSSRLRFLNKVSSLTYHYSFAFF) directs the protein to the mitochondrion. PPR repeat units follow at residues 146–180 (LPQACEIMASMLIREGMVKEVELLLMEMERHGDTM), 182–216 (NEGIFCDLIGKYVDDFDSRKAVMLFDWMRRKGLVP), 217–251 (LTSCYQILIDQLVRVHRTESAYRICLDWVETRAEL), 255–289 (NIDSIGKVIELLCLDQKVQEARVLARKLVALGCIL), 290–320 (NSSIYSKITIGYNEKQDFEDLLSFIGEVKYE), 322–356 (DVFVGNRILHSLCRRFGSERAYVYMEELEHLGFKQ), 357–391 (DEVTFGILIGWCCYEGDIKRAVLYLSEIMSKGYKP), 392–426 (DVYSYNAILSGLFRKGLWQHTHCILDEMKENGMML), 427–461 (SLSTFKIMVTGYCKARQFEEAKRIVNKMFGYGLIE), 527–561 (VLPEFNSLIVRASEDGDLQTALRLLDEMARWGQKL), 562–597 (SRRSFAVLMRSLCASRAHLRVSISLLEKWPKLAYQL), 598–632 (DGETLNFLVQEYCKKGFSRHSKLIFHKMVQMHHPI), 633–667 (DNVTYTSLIRCFCKKETLNDLLNVWGAAQNDNWLP), 668–698 (DLNDCGDLWNCLVRKGLVEEVVQLFERVFIS), 703–737 (QSEACRIFVEKLTVLGFSCIAHSVVKRLEGEGCIV), 738–772 (EQEVYNHLIKGLCTEKKDSAAFAILDEMLDKKHIP), 773–800 (SLGSCLMLIPRLCRANKAGTAFNLAEQI), 802–836 (SSYVHYALIKGLSLAGKMLDAENQLRIMLSNGLSS), 837–871 (YNKIYNVMFQGYCKGNNWMKVEEVLGLMVRKNIIC), 872–906 (SVKSYREYVRKMCLEPQSLSAISLKEFLLLGESNP), 908–942 (GVIIYNMLIFYMFRAKNHLEVNKVLLEMQGRGVLP), 943–977 (DETTFNFLVHGYSSSADYSSSLRYLSAMISKGMKP), 978–1012 (NNRSLRAVTSSLCDNGDVKKALDLWQVMESKGWNL), 1014–1044 (SSVVQTKIVETLISKGEIPKAEDFLTRVTRN), 1047–1081 (MAPNYDNIIKKLSDRGNLDIAVHLLNTMLKNQSIP), 1082–1116 (GSSSYDSVINGLLRYNQLDKAMDFHTEMVELGLSP), 1117–1151 (SISTWSGLVHKFCEACQVLESERLIKSMVGLGESP), and 1152–1186 (SQEMFKTVIDRFRVEKNTVKASEMMEMMQKCGYEV).

Belongs to the PPR family. P subfamily.

It localises to the mitochondrion. In Arabidopsis thaliana (Mouse-ear cress), this protein is Pentatricopeptide repeat-containing protein At5g15280, mitochondrial.